Consider the following 364-residue polypeptide: S-adenosylmethionine:tRNA ribosyltransferase-isomerase (364 aa).

Residues Ala-344–Ile-364 form a disordered region.

The protein belongs to the QueA family. In terms of assembly, monomer.

It is found in the cytoplasm. The catalysed reaction is 7-aminomethyl-7-carbaguanosine(34) in tRNA + S-adenosyl-L-methionine = epoxyqueuosine(34) in tRNA + adenine + L-methionine + 2 H(+). It functions in the pathway tRNA modification; tRNA-queuosine biosynthesis. Its function is as follows. Transfers and isomerizes the ribose moiety from AdoMet to the 7-aminomethyl group of 7-deazaguanine (preQ1-tRNA) to give epoxyqueuosine (oQ-tRNA). The protein is S-adenosylmethionine:tRNA ribosyltransferase-isomerase of Thioalkalivibrio sulfidiphilus (strain HL-EbGR7).